We begin with the raw amino-acid sequence, 462 residues long: Elongation factor 1-alpha 1 (462 aa).

A N,N,N-trimethylglycine modification is found at Gly-2. The 238-residue stretch at 5–242 folds into the tr-type G domain; it reads KTHINIVVIG…DCILPPTRPT (238 aa). The tract at residues 14–21 is G1; sequence GHVDSGKS. 14–21 contributes to the GTP binding site; sequence GHVDSGKS. Lys-36 bears the N6,N6,N6-trimethyllysine; alternate mark. An N6,N6-dimethyllysine; alternate modification is found at Lys-36. Lys-36 carries the post-translational modification N6-methyllysine; alternate. At Lys-55 the chain carries N6,N6-dimethyllysine. The G2 stretch occupies residues 70 to 74; the sequence is GITID. Residue Lys-79 is modified to N6,N6,N6-trimethyllysine; by EEF1AKMT1. The interval 91 to 94 is G3; sequence DAPG. 153–156 contributes to the GTP binding site; that stretch reads NKMD. The tract at residues 153-156 is G4; sequence NKMD. Residue Lys-165 is modified to N6,N6,N6-trimethyllysine; alternate; by EEF1AKMT3. An N6,N6-dimethyllysine; alternate; by EEF1AKMT3 modification is found at Lys-165. The residue at position 165 (Lys-165) is an N6-acetyllysine; alternate. Lys-165 carries the post-translational modification N6-methyllysine; alternate; by EEF1AKMT3. Position 172 is an N6-acetyllysine (Lys-172). 194-196 lines the GTP pocket; the sequence is SGW. Residues 194 to 196 are G5; sequence SGW. Lys-273 carries the N6-acetyllysine modification. The residue at position 300 (Ser-300) is a Phosphoserine; by TGFBR1. Glu-301 is modified (5-glutamyl glycerylphosphorylethanolamine). At Lys-318 the chain carries N6,N6,N6-trimethyllysine; by EEF1AKMT2. Glu-374 is modified (5-glutamyl glycerylphosphorylethanolamine). A Glycyl lysine isopeptide (Lys-Gly) (interchain with G-Cter in ubiquitin) cross-link involves residue Lys-385. An N6-acetyllysine; alternate modification is found at Lys-392. Lys-392 carries the post-translational modification N6-succinyllysine; alternate. Phosphothreonine; by PASK is present on Thr-432. An N6-acetyllysine modification is found at Lys-439.

It belongs to the TRAFAC class translation factor GTPase superfamily. Classic translation factor GTPase family. EF-Tu/EF-1A subfamily. In terms of assembly, found in a nuclear export complex with XPO5, EEF1A1, Ran and aminoacylated tRNA. Interacts with PARP1 and TXK. Interacts with KARS1. May interact with ERGIC2. Interacts with IFIT1 (via TPR repeats 4-7). Interacts with DLC1, facilitating distribution to the membrane periphery and ruffles upon growth factor stimulation. Interacts with ZPR1; the interaction occurs in a epidermal growth factor (EGF)-dependent manner. Interacts with PPP1R16B. Interacts with SPHK1 and SPHK2; both interactions increase SPHK1 and SPHK2 kinase activity. Interacts with guanyl-nucleotide exchange factor EEF1B2. Interacts (via middle-region) with HTATIP2 (via N-terminus); the interaction is direct and competes with EEF1A1 binding to guanyl-nucleotide exchange factor EEF1B2, thereby inhibiting GDP for GTP exchange and reactivation of EEF1A1. Interacts with tRNA. In terms of processing, ISGylated. Phosphorylated by TXK. Phosphorylation by PASK increases translation efficiency. Phosphorylated by ROCK2. Phosphorylation by TGFBR1 inhibits translation elongation. Post-translationally, trimethylated at Lys-79 by EEF1AKMT1. Methylated at Lys-165 by EEF1AKMT3, methylation by EEF1AKMT3 is dynamic as well as inducible by stress conditions, such as ER-stress, and plays a regulatory role on mRNA translation. Trimethylated at Lys-318 by EEF1AKMT2. Mono-, di-, and trimethylated at Lys-36 by EEF1AKMT4; trimethylated form is predominant. Methylation by EEF1AKMT4 contributes to the fine-tuning of translation rates for a subset of tRNAs. Trimethylated at Gly-2 by METTL13. Mono- and dimethylated at Lys-55 by METTL13; dimethylated form is predominant. In terms of processing, ubiquitinated at Lys-385 by RNF14 in response to ribosome collisions (ribosome stalling), leading to its degradation by the proteasome and rescue of stalled ribosomes.

It is found in the cytoplasm. The protein localises to the nucleus. The protein resides in the nucleolus. It localises to the cell membrane. The catalysed reaction is GTP + H2O = GDP + phosphate + H(+). Its function is as follows. Translation elongation factor that catalyzes the GTP-dependent binding of aminoacyl-tRNA (aa-tRNA) to the A-site of ribosomes during the elongation phase of protein synthesis. Base pairing between the mRNA codon and the aa-tRNA anticodon promotes GTP hydrolysis, releasing the aa-tRNA from EEF1A1 and allowing its accommodation into the ribosome. The growing protein chain is subsequently transferred from the P-site peptidyl tRNA to the A-site aa-tRNA, extending it by one amino acid through ribosome-catalyzed peptide bond formation. Also plays a role in the positive regulation of IFNG transcription in T-helper 1 cells as part of an IFNG promoter-binding complex with TXK and PARP1. Also plays a role in cytoskeleton organization by promoting actin bundling. The polypeptide is Elongation factor 1-alpha 1 (EEF1A1) (Equus caballus (Horse)).